The sequence spans 93 residues: Small ribosomal subunit protein uS19 (93 aa).

The protein belongs to the universal ribosomal protein uS19 family.

Functionally, protein S19 forms a complex with S13 that binds strongly to the 16S ribosomal RNA. The sequence is that of Small ribosomal subunit protein uS19 from Streptococcus gordonii (strain Challis / ATCC 35105 / BCRC 15272 / CH1 / DL1 / V288).